The sequence spans 391 residues: Inositol-tetrakisphosphate 1-kinase 2 (391 aa).

1D-myo-inositol 1,3,4-trisphosphate contacts are provided by lysine 90 and lysine 132. Residues arginine 167 and lysine 217 each contribute to the ATP site. Residues 178–384 form the ATP-grasp domain; sequence KLSDCSGSLF…FFQNLAQVKY (207 aa). 1D-myo-inositol 1,3,4-trisphosphate is bound by residues histidine 228 and lysine 260. ATP is bound by residues 249-260 and serine 275; that span reads QEFVNHGGVMFK. Mg(2+)-binding residues include aspartate 340, aspartate 355, and asparagine 357. A 1D-myo-inositol 1,3,4-trisphosphate-binding site is contributed by asparagine 357.

This sequence belongs to the ITPK1 family. In terms of assembly, monomer. Mg(2+) is required as a cofactor. In terms of tissue distribution, expressed in seedling roots, cotyledons, rosette leaves, cauline leaves, stems, flowers, siliques and seeds.

The enzyme catalyses 1D-myo-inositol 3,4,5,6-tetrakisphosphate + ATP = 1D-myo-inositol 1,3,4,5,6-pentakisphosphate + ADP + H(+). The catalysed reaction is 1D-myo-inositol 1,3,4-trisphosphate + ATP = 1D-myo-inositol 1,3,4,5-tetrakisphosphate + ADP + H(+). It catalyses the reaction 1D-myo-inositol 1,3,4-trisphosphate + ATP = 1D-myo-inositol 1,3,4,6-tetrakisphosphate + ADP + H(+). Its function is as follows. Kinase that can phosphorylate various inositol polyphosphate such as Ins(3,4,5,6)P4 or Ins(1,3,4)P3. Phosphorylates Ins(3,4,5,6)P4 to form InsP5. This reaction is thought to have regulatory importance, since Ins(3,4,5,6)P4 is an inhibitor of plasma membrane Ca(2+)-activated Cl(-) channels, while Ins(1,3,4,5,6)P5 is not. Also phosphorylates Ins(1,3,4)P3 or a racemic mixture of Ins(1,4,6)P3 and Ins(3,4,6)P3 to form InsP4. Ins(1,3,4,6)P4 is an essential molecule in the hexakisphosphate (InsP6) pathway. Plays a role in seed coat development and lipid polyester barrier formation. In Arabidopsis thaliana (Mouse-ear cress), this protein is Inositol-tetrakisphosphate 1-kinase 2 (ITPK2).